Reading from the N-terminus, the 730-residue chain is Procollagen-lysine,2-oxoglutarate 5-dioxygenase 1 (730 aa).

A signal peptide spans 1–20 (MVPPAVLLPWVVLPLLGVQG). Residues Asn-200, Asn-403, and Asn-541 are each glycosylated (N-linked (GlcNAc...) asparagine). In terms of domain architecture, Fe2OG dioxygenase spans 639-730 (QFELAFVVRY…RYIAVSFIDP (92 aa)). Residues His-659 and Asp-661 each coordinate Fe cation. N-linked (GlcNAc...) asparagine glycosylation occurs at Asn-689. Residue His-711 participates in Fe cation binding. Arg-721 is an active-site residue.

In terms of assembly, homodimer. Fe(2+) is required as a cofactor. The cofactor is L-ascorbate.

Its subcellular location is the rough endoplasmic reticulum membrane. It catalyses the reaction L-lysyl-[collagen] + 2-oxoglutarate + O2 = (5R)-5-hydroxy-L-lysyl-[collagen] + succinate + CO2. Forms hydroxylysine residues in -Xaa-Lys-Gly- sequences in collagens. These hydroxylysines serve as sites of attachment for carbohydrate units and are essential for the stability of the intermolecular collagen cross-links. This is Procollagen-lysine,2-oxoglutarate 5-dioxygenase 1 (PLOD1) from Gallus gallus (Chicken).